The sequence spans 359 residues: Methylthioribose-1-phosphate isomerase (359 aa).

The active-site Proton donor is Asp-235.

It belongs to the eIF-2B alpha/beta/delta subunits family. MtnA subfamily.

Its subcellular location is the cytoplasm. The protein resides in the nucleus. The enzyme catalyses 5-(methylsulfanyl)-alpha-D-ribose 1-phosphate = 5-(methylsulfanyl)-D-ribulose 1-phosphate. The protein operates within amino-acid biosynthesis; L-methionine biosynthesis via salvage pathway; L-methionine from S-methyl-5-thio-alpha-D-ribose 1-phosphate: step 1/6. Functionally, catalyzes the interconversion of methylthioribose-1-phosphate (MTR-1-P) into methylthioribulose-1-phosphate (MTRu-1-P). This is Methylthioribose-1-phosphate isomerase (mri1) from Schizosaccharomyces pombe (strain 972 / ATCC 24843) (Fission yeast).